The following is a 165-amino-acid chain: Mediator of RNA polymerase II transcription subunit 10 (165 aa).

2 disordered regions span residues 54–81 (SLHTRDDPTASTTAPNQYQSTNPNDPAL) and 143–165 (LRGEVDKVIQATGGKKQSERERG). The segment covering 62 to 77 (TASTTAPNQYQSTNPN) has biased composition (polar residues).

The protein belongs to the Mediator complex subunit 10 family. In terms of assembly, component of the Mediator complex.

It is found in the nucleus. Its function is as follows. Component of the Mediator complex, a coactivator involved in the regulated transcription of nearly all RNA polymerase II-dependent genes. Mediator functions as a bridge to convey information from gene-specific regulatory proteins to the basal RNA polymerase II transcription machinery. Mediator is recruited to promoters by direct interactions with regulatory proteins and serves as a scaffold for the assembly of a functional preinitiation complex with RNA polymerase II and the general transcription factors. The polypeptide is Mediator of RNA polymerase II transcription subunit 10 (nut2) (Emericella nidulans (strain FGSC A4 / ATCC 38163 / CBS 112.46 / NRRL 194 / M139) (Aspergillus nidulans)).